A 347-amino-acid chain; its full sequence is Globoside alpha-1,3-N-acetylgalactosaminyltransferase 1 (347 aa).

Residues 1–6 are Cytoplasmic-facing; it reads MTRPRL. A helical; Signal-anchor for type II membrane protein transmembrane segment spans residues 7–27; that stretch reads AQGLAFFLLGGTGLWVLWKFI. The Lumenal portion of the chain corresponds to 28–347; sequence KDWLLVSYIP…VKKNANWLRT (320 aa). Asn108 is a glycosylation site (N-linked (GlcNAc...) asparagine). Residues 116–121, 206–208, and 228–231 contribute to the substrate site; these read FAVGKY, DVD, and HPGY. Residues Asp206 and Asp208 each contribute to the Mn(2+) site. Glu298 (nucleophile) is an active-site residue.

It belongs to the glycosyltransferase 6 family. Mn(2+) is required as a cofactor.

Its subcellular location is the golgi apparatus membrane. It catalyses the reaction a globoside Gb4Cer (d18:1(4E)) + UDP-N-acetyl-alpha-D-galactosamine = a globoside Forssman (d18:1(4E)) + UDP + H(+). It carries out the reaction a globoside Gb4Cer + UDP-N-acetyl-alpha-D-galactosamine = a globoside IV3GalNAc-Gb4Cer + UDP + H(+). It participates in protein modification; protein glycosylation. Catalyzes the formation of Forssman glycolipid via the addition of N-acetylgalactosamine (GalNAc) in alpha-1,3-linkage to GalNAcb-1,3Gala-1,4Galb-1,4GlcCer (Gb4Cer). Forssman glycolipid (also called Forssman antigen; FG) probably serves for adherence of some pathogens. Conversely, it diminishes Shiga toxins susceptibility. This is Globoside alpha-1,3-N-acetylgalactosaminyltransferase 1 from Mus musculus (Mouse).